The sequence spans 255 residues: Thiazole synthase (255 aa).

The active-site Schiff-base intermediate with DXP is K96. Residues G157, 183–184, and 205–206 contribute to the 1-deoxy-D-xylulose 5-phosphate site; these read AG and NT.

Belongs to the ThiG family. As to quaternary structure, homotetramer. Forms heterodimers with either ThiH or ThiS.

The protein localises to the cytoplasm. The catalysed reaction is [ThiS sulfur-carrier protein]-C-terminal-Gly-aminoethanethioate + 2-iminoacetate + 1-deoxy-D-xylulose 5-phosphate = [ThiS sulfur-carrier protein]-C-terminal Gly-Gly + 2-[(2R,5Z)-2-carboxy-4-methylthiazol-5(2H)-ylidene]ethyl phosphate + 2 H2O + H(+). The protein operates within cofactor biosynthesis; thiamine diphosphate biosynthesis. Catalyzes the rearrangement of 1-deoxy-D-xylulose 5-phosphate (DXP) to produce the thiazole phosphate moiety of thiamine. Sulfur is provided by the thiocarboxylate moiety of the carrier protein ThiS. In vitro, sulfur can be provided by H(2)S. The protein is Thiazole synthase of Bacillus licheniformis (strain ATCC 14580 / DSM 13 / JCM 2505 / CCUG 7422 / NBRC 12200 / NCIMB 9375 / NCTC 10341 / NRRL NRS-1264 / Gibson 46).